The sequence spans 705 residues: Fatty acid oxidation complex subunit alpha (705 aa).

The tract at residues 1–188 is enoyl-CoA hydratase; that stretch reads MGKTFNLTRR…KMGLVNDVVP (188 aa). The tract at residues 308-705 is 3-hydroxyacyl-CoA dehydrogenase; that stretch reads RKVKKAVILG…AMAAEKARFF (398 aa).

The protein in the N-terminal section; belongs to the enoyl-CoA hydratase/isomerase family. It in the central section; belongs to the 3-hydroxyacyl-CoA dehydrogenase family. Heterotetramer of two alpha chains (FadJ) and two beta chains (FadI).

It is found in the cytoplasm. The catalysed reaction is a (3S)-3-hydroxyacyl-CoA = a (2E)-enoyl-CoA + H2O. It catalyses the reaction a 4-saturated-(3S)-3-hydroxyacyl-CoA = a (3E)-enoyl-CoA + H2O. It carries out the reaction a (3S)-3-hydroxyacyl-CoA + NAD(+) = a 3-oxoacyl-CoA + NADH + H(+). The enzyme catalyses (3S)-3-hydroxybutanoyl-CoA = (3R)-3-hydroxybutanoyl-CoA. Its pathway is lipid metabolism; fatty acid beta-oxidation. In terms of biological role, catalyzes the formation of a hydroxyacyl-CoA by addition of water on enoyl-CoA. Also exhibits 3-hydroxyacyl-CoA epimerase and 3-hydroxyacyl-CoA dehydrogenase activities. This chain is Fatty acid oxidation complex subunit alpha, found in Shewanella oneidensis (strain ATCC 700550 / JCM 31522 / CIP 106686 / LMG 19005 / NCIMB 14063 / MR-1).